The following is a 116-amino-acid chain: Large ribosomal subunit protein bL17 (116 aa).

This sequence belongs to the bacterial ribosomal protein bL17 family. As to quaternary structure, part of the 50S ribosomal subunit. Contacts protein L32.

The sequence is that of Large ribosomal subunit protein bL17 from Microcystis aeruginosa (strain NIES-843 / IAM M-2473).